Reading from the N-terminus, the 88-residue chain is HssA/B-like protein 11 (88 aa).

It belongs to the hssA/B family.

This Dictyostelium discoideum (Social amoeba) protein is HssA/B-like protein 11 (hssl11).